We begin with the raw amino-acid sequence, 904 residues long: Copper-transporting ATPase ccc2 (904 aa).

Topologically, residues 1–172 (MYTTTLSVQG…GSQIRVWKIR (172 aa)) are cytoplasmic. An HMA domain is found at 2–68 (YTTTLSVQGM…KIEDCGFDAS (67 aa)). Cu(+) contacts are provided by cysteine 13 and cysteine 16. Residues 173–193 (FIISISFSLAVMFLPQIFDSC) form a helical membrane-spanning segment. Over 194 to 197 (DSMR) the chain is Lumenal, vesicle. A helical transmembrane segment spans residues 198–218 (AAFLVPHYFGICAGHIISLVL). Residues 219-246 (SLPVQFGVGRVYYSAAYHALKRGTANMD) are Cytoplasmic-facing. A helical transmembrane segment spans residues 247–267 (VLVSLGSTVAFAASIFFMILY). The Lumenal, vesicle segment spans residues 268-278 (SARHADNPAPI). A helical transmembrane segment spans residues 279-296 (FFDTADMLLTFVTLGRYL). The Cytoplasmic segment spans residues 297–431 (ESKAKGSTSA…PIQQFADRVA (135 aa)). A helical membrane pass occupies residues 432–452 (GIFVPVIVALSISTFTFWFLF). The Lumenal, vesicle segment spans residues 453–469 (TKYSSKYPSVFDDPMGK). The helical transmembrane segment at 470–490 (FAVCLKLTISVVVVACPCALG) threads the bilayer. Over 491-805 (LSTPTAVMVG…RIKMNLVWAC (315 aa)) the chain is Cytoplasmic. Aspartate 529 acts as the 4-aspartylphosphate intermediate in catalysis. Positions 742 and 746 each coordinate Mg(2+). The chain crosses the membrane as a helical span at residues 806 to 826 (IYNFVMIPIAMGFFLPWGIYL). The Lumenal, vesicle segment spans residues 827-828 (NP). Residues 829-849 (MWASAAMMFSSLSVLASSLLL) traverse the membrane as a helical segment. Topologically, residues 850–904 (RRWKKPKSLIFSEADDVETESSTNSSVLQKVYTATRSIFGRNKSSNKYQPVANEV) are cytoplasmic.

This sequence belongs to the cation transport ATPase (P-type) (TC 3.A.3) family. Type IB subfamily.

The protein localises to the golgi apparatus. It is found in the trans-Golgi network membrane. The enzyme catalyses Cu(+)(in) + ATP + H2O = Cu(+)(out) + ADP + phosphate + H(+). Functionally, probably involved in copper transport and in the regulation of cellular copper level. Retrieves copper from the metallochaperone atx1 and incorporates it into trans-Golgi vesicles. The protein is Copper-transporting ATPase ccc2 (ccc2) of Schizosaccharomyces pombe (strain 972 / ATCC 24843) (Fission yeast).